The primary structure comprises 63 residues: Large ribosomal subunit protein bL32 (63 aa).

Over residues 1-16 the composition is skewed to basic residues; the sequence is MAVPKRKTSRMKRGFR. The interval 1–22 is disordered; that stretch reads MAVPKRKTSRMKRGFRRSADAI.

The protein belongs to the bacterial ribosomal protein bL32 family.

In Beijerinckia indica subsp. indica (strain ATCC 9039 / DSM 1715 / NCIMB 8712), this protein is Large ribosomal subunit protein bL32.